A 389-amino-acid polypeptide reads, in one-letter code: G2/M cell-cycle inhibitor DR6 (389 aa).

This sequence belongs to the Roseolovirus DR6 family.

The protein localises to the host nucleus. Functionally, inhibits the host G2/M cell-cycle progression in a p53-independent manner. This chain is G2/M cell-cycle inhibitor DR6 (DR6L), found in Homo sapiens (Human).